The sequence spans 175 residues: Large ribosomal subunit protein bL17 (175 aa).

Positions 127–175 are disordered; the sequence is GEAEAATKRAVKEDALKKDEAPAAESVEDAKPAEDAPAAEAADDKGKDA. Over residues 131–147 the composition is skewed to basic and acidic residues; the sequence is AATKRAVKEDALKKDEA.

The protein belongs to the bacterial ribosomal protein bL17 family. In terms of assembly, part of the 50S ribosomal subunit. Contacts protein L32.

In Streptomyces griseus subsp. griseus (strain JCM 4626 / CBS 651.72 / NBRC 13350 / KCC S-0626 / ISP 5235), this protein is Large ribosomal subunit protein bL17.